A 260-amino-acid polypeptide reads, in one-letter code: Small ribosomal subunit protein bS6 (260 aa).

The protein belongs to the bacterial ribosomal protein bS6 family.

Its function is as follows. Binds together with bS18 to 16S ribosomal RNA. The protein is Small ribosomal subunit protein bS6 of Wolbachia sp. subsp. Brugia malayi (strain TRS).